The sequence spans 1372 residues: DNA-directed RNA polymerase subunit beta (1372 aa).

Belongs to the RNA polymerase beta chain family. In terms of assembly, the RNAP catalytic core consists of 2 alpha, 1 beta, 1 beta' and 1 omega subunit. When a sigma factor is associated with the core the holoenzyme is formed, which can initiate transcription.

The enzyme catalyses RNA(n) + a ribonucleoside 5'-triphosphate = RNA(n+1) + diphosphate. Its function is as follows. DNA-dependent RNA polymerase catalyzes the transcription of DNA into RNA using the four ribonucleoside triphosphates as substrates. This chain is DNA-directed RNA polymerase subunit beta, found in Rickettsia bellii (strain OSU 85-389).